The sequence spans 1158 residues: Putative HERC2-like protein 3 (1158 aa).

The disordered stretch occupies residues 281 to 302 (PRKKRVPKKPESTDDEEKIGNE). Acidic residues predominate over residues 293 to 302 (TDDEEKIGNE). The MIB/HERC2 domain maps to 587-660 (SGPELAAMMK…NYDLKLAELP (74 aa)). The tract at residues 662 to 684 (PAQPSAEDSDTEDDSEAEQTERN) is disordered. Over residues 668 to 679 (EDSDTEDDSEAE) the composition is skewed to acidic residues.

The protein is Putative HERC2-like protein 3 (HERC2P3) of Homo sapiens (Human).